A 206-amino-acid polypeptide reads, in one-letter code: Large ribosomal subunit protein uL3 (206 aa).

Residues 127–151 (SGGPSSHGSKFHRHLGGTGQATTPA) form a disordered region.

The protein belongs to the universal ribosomal protein uL3 family. As to quaternary structure, part of the 50S ribosomal subunit. Forms a cluster with proteins L14 and L19.

One of the primary rRNA binding proteins, it binds directly near the 3'-end of the 23S rRNA, where it nucleates assembly of the 50S subunit. The protein is Large ribosomal subunit protein uL3 of Borrelia garinii subsp. bavariensis (strain ATCC BAA-2496 / DSM 23469 / PBi) (Borreliella bavariensis).